Reading from the N-terminus, the 355-residue chain is D-alanine--D-alanine ligase (355 aa).

The region spanning 143 to 350 is the ATP-grasp domain; it reads KTIFSNHKLP…IEQLVAKLVD (208 aa). 178-233 serves as a coordination point for ATP; it reads LKKLKFPVFVKPSNSGSSLGISKVKNESEILLALEKAWGIDPRILIEEGLEVREIE. Asp-303, Glu-317, and Asn-319 together coordinate Mg(2+).

The protein belongs to the D-alanine--D-alanine ligase family. It depends on Mg(2+) as a cofactor. Mn(2+) serves as cofactor.

The protein localises to the cytoplasm. The catalysed reaction is 2 D-alanine + ATP = D-alanyl-D-alanine + ADP + phosphate + H(+). Its pathway is cell wall biogenesis; peptidoglycan biosynthesis. Its function is as follows. Cell wall formation. The sequence is that of D-alanine--D-alanine ligase from Prochlorococcus marinus (strain MIT 9301).